A 246-amino-acid chain; its full sequence is Hydroxyacylglutathione hydrolase (246 aa).

Histidine 58, histidine 60, aspartate 62, histidine 63, histidine 117, aspartate 137, and histidine 175 together coordinate Zn(2+).

This sequence belongs to the metallo-beta-lactamase superfamily. Glyoxalase II family. Monomer. The cofactor is Zn(2+).

It carries out the reaction an S-(2-hydroxyacyl)glutathione + H2O = a 2-hydroxy carboxylate + glutathione + H(+). The protein operates within secondary metabolite metabolism; methylglyoxal degradation; (R)-lactate from methylglyoxal: step 2/2. Its function is as follows. Thiolesterase that catalyzes the hydrolysis of S-D-lactoyl-glutathione to form glutathione and D-lactic acid. The chain is Hydroxyacylglutathione hydrolase from Prochlorococcus marinus (strain MIT 9312).